A 559-amino-acid chain; its full sequence is Polypeptide N-acetylgalactosaminyltransferase 1 (559 aa).

At 1-8 the chain is on the cytoplasmic side; it reads MRKFAYCK. A helical; Signal-anchor for type II membrane protein transmembrane segment spans residues 9 to 28; it reads VVLATSLVWVLLDMFLLLYF. Residues 29-559 are Lumenal-facing; it reads SECNKCEEKK…LRNVTLPEIF (531 aa). The N-linked (GlcNAc...) asparagine glycan is linked to N95. 5 disulfide bridges follow: C106-C339, C330-C408, C442-C459, C482-C497, and C523-C540. A catalytic subdomain A region spans residues 115–225; the sequence is LPTTSVVIVF…VGWLEPLLAR (111 aa). Substrate contacts are provided by D156 and R186. Mn(2+) is bound by residues D209 and H211. The tract at residues 285 to 347 is catalytic subdomain B; sequence PVRTPTMAGG…TCSHVGHVFR (63 aa). Position 316 (W316) interacts with substrate. Residue H344 coordinates Mn(2+). 2 residues coordinate substrate: R347 and Y352. Positions 429–551 constitute a Ricin B-type lectin domain; the sequence is FSLGEIRNVE…GSRSQQWLLR (123 aa). N552 carries N-linked (GlcNAc...) asparagine glycosylation.

The protein belongs to the glycosyltransferase 2 family. GalNAc-T subfamily. Requires Mn(2+) as cofactor. Heart, brain, spleen, liver, skeletal muscle and kidney.

It localises to the golgi apparatus. Its subcellular location is the golgi stack membrane. The protein localises to the secreted. It carries out the reaction L-seryl-[protein] + UDP-N-acetyl-alpha-D-galactosamine = a 3-O-[N-acetyl-alpha-D-galactosaminyl]-L-seryl-[protein] + UDP + H(+). It catalyses the reaction L-threonyl-[protein] + UDP-N-acetyl-alpha-D-galactosamine = a 3-O-[N-acetyl-alpha-D-galactosaminyl]-L-threonyl-[protein] + UDP + H(+). It participates in protein modification; protein glycosylation. Catalyzes the initial reaction in O-linked oligosaccharide biosynthesis, the transfer of an N-acetyl-D-galactosamine residue to a serine or threonine residue on the protein receptor. Has a broad spectrum of substrates such as apomucin-, MUC5AC-, MUC1- and MUC2-derived peptides. This chain is Polypeptide N-acetylgalactosaminyltransferase 1, found in Rattus norvegicus (Rat).